Consider the following 350-residue polypeptide: Lipoyl synthase, mitochondrial (350 aa).

Residues cysteine 83, cysteine 88, cysteine 94, cysteine 113, cysteine 117, cysteine 120, and serine 328 each contribute to the [4Fe-4S] cluster site. In terms of domain architecture, Radical SAM core spans 96-317; sequence GGESGTATAT…EKVGNELGFA (222 aa).

This sequence belongs to the radical SAM superfamily. Lipoyl synthase family. [4Fe-4S] cluster is required as a cofactor.

The protein resides in the mitochondrion. The catalysed reaction is [[Fe-S] cluster scaffold protein carrying a second [4Fe-4S](2+) cluster] + N(6)-octanoyl-L-lysyl-[protein] + 2 oxidized [2Fe-2S]-[ferredoxin] + 2 S-adenosyl-L-methionine + 4 H(+) = [[Fe-S] cluster scaffold protein] + N(6)-[(R)-dihydrolipoyl]-L-lysyl-[protein] + 4 Fe(3+) + 2 hydrogen sulfide + 2 5'-deoxyadenosine + 2 L-methionine + 2 reduced [2Fe-2S]-[ferredoxin]. It participates in protein modification; protein lipoylation via endogenous pathway; protein N(6)-(lipoyl)lysine from octanoyl-[acyl-carrier-protein]: step 2/2. Its function is as follows. Catalyzes the radical-mediated insertion of two sulfur atoms into the C-6 and C-8 positions of the octanoyl moiety bound to the lipoyl domains of lipoate-dependent enzymes, thereby converting the octanoylated domains into lipoylated derivatives. The chain is Lipoyl synthase, mitochondrial from Trichoplax adhaerens (Trichoplax reptans).